A 98-amino-acid chain; its full sequence is NADH-ubiquinone oxidoreductase chain 4L (98 aa).

Helical transmembrane passes span 1–21 (MSPV…GLAF), 26–46 (LLSA…AIAL), and 61–81 (MILL…LVAA).

Belongs to the complex I subunit 4L family.

The protein localises to the mitochondrion membrane. It carries out the reaction a ubiquinone + NADH + 5 H(+)(in) = a ubiquinol + NAD(+) + 4 H(+)(out). Its function is as follows. Core subunit of the mitochondrial membrane respiratory chain NADH dehydrogenase (Complex I) which catalyzes electron transfer from NADH through the respiratory chain, using ubiquinone as an electron acceptor. Part of the enzyme membrane arm which is embedded in the lipid bilayer and involved in proton translocation. In Squalus acanthias (Spiny dogfish), this protein is NADH-ubiquinone oxidoreductase chain 4L (MT-ND4L).